We begin with the raw amino-acid sequence, 367 residues long: Alcohol dehydrogenase 2 (367 aa).

Zn(2+) contacts are provided by Cys48, His74, Cys107, Cys110, Cys113, Cys121, and Cys163. NAD(+) contacts are provided by residues 187-193 (GAGGGLG), Asp212, Lys216, 286-288 (VGI), and Arg361.

It belongs to the zinc-containing alcohol dehydrogenase family. In terms of assembly, homotetramer. Requires Zn(2+) as cofactor.

It is found in the cytoplasm. It carries out the reaction a primary alcohol + NAD(+) = an aldehyde + NADH + H(+). The catalysed reaction is a secondary alcohol + NAD(+) = a ketone + NADH + H(+). The chain is Alcohol dehydrogenase 2 (alcB) from Emericella nidulans (strain FGSC A4 / ATCC 38163 / CBS 112.46 / NRRL 194 / M139) (Aspergillus nidulans).